Consider the following 420-residue polypeptide: ATP phosphoribosyltransferase regulatory subunit (420 aa).

It belongs to the class-II aminoacyl-tRNA synthetase family. HisZ subfamily. As to quaternary structure, heteromultimer composed of HisG and HisZ subunits.

It is found in the cytoplasm. It participates in amino-acid biosynthesis; L-histidine biosynthesis; L-histidine from 5-phospho-alpha-D-ribose 1-diphosphate: step 1/9. Functionally, required for the first step of histidine biosynthesis. May allow the feedback regulation of ATP phosphoribosyltransferase activity by histidine. This Synechococcus sp. (strain ATCC 27144 / PCC 6301 / SAUG 1402/1) (Anacystis nidulans) protein is ATP phosphoribosyltransferase regulatory subunit.